A 461-amino-acid chain; its full sequence is GTPase Der (461 aa).

EngA-type G domains lie at 9 to 171 (KTIA…DLNQ) and 200 to 371 (IQVG…ECFS). GTP is bound by residues 15–22 (GQPNVGKS), 62–66 (DTGGM), 123–126 (NKID), 206–213 (GRVNVGKS), 253–257 (DTAGI), and 317–320 (NKWD). Residues 372-456 (KRIPTSLLNS…PLILNAKDKK (85 aa)) enclose the KH-like domain.

It belongs to the TRAFAC class TrmE-Era-EngA-EngB-Septin-like GTPase superfamily. EngA (Der) GTPase family. As to quaternary structure, associates with the 50S ribosomal subunit.

Functionally, GTPase that plays an essential role in the late steps of ribosome biogenesis. This chain is GTPase Der, found in Helicobacter pylori (strain Shi470).